The chain runs to 488 residues: Mannitol 2-dehydrogenase (488 aa).

37 to 48 (IVHVGVGGFHRA) provides a ligand contact to NAD(+).

The protein belongs to the mannitol dehydrogenase family. Monomer.

It carries out the reaction D-mannitol + NAD(+) = D-fructose + NADH + H(+). Functionally, catalyzes the NAD(H)-dependent interconversion of D-fructose and D-mannitol in the mannitol metabolic pathway. The sequence is that of Mannitol 2-dehydrogenase from Aspergillus niger (strain ATCC MYA-4892 / CBS 513.88 / FGSC A1513).